Here is a 347-residue protein sequence, read N- to C-terminus: Probable E3 ubiquitin-protein ligase DTX3 (347 aa).

Residues 113-157 (EHPEMHRAGPPPLRAAPLLPPGARGLPPPPPPLPPPLPPRLREEA) are disordered. Positions 121–151 (GPPPLRAAPLLPPGARGLPPPPPPLPPPLPP) are enriched in pro residues. Residues 164-205 (CPICLGEIQNAKTLEKCRHSFCEGCITRALQVKKACPMCGRF) form an RING-type zinc finger.

The protein belongs to the Deltex family. In terms of assembly, homodimer. May form a heterodimers with other members of the Deltex family. Interacts with NOTCH1.

It is found in the cytoplasm. The enzyme catalyses S-ubiquitinyl-[E2 ubiquitin-conjugating enzyme]-L-cysteine + [acceptor protein]-L-lysine = [E2 ubiquitin-conjugating enzyme]-L-cysteine + N(6)-ubiquitinyl-[acceptor protein]-L-lysine.. It functions in the pathway protein modification; protein ubiquitination. Its function is as follows. Regulator of Notch signaling, a signaling pathway involved in cell-cell communications that regulates a broad spectrum of cell-fate determinations. Probably acts both as a positive and negative regulator of Notch, depending on the developmental and cell context. Functions as an ubiquitin ligase protein in vitro, suggesting that it may regulate the Notch pathway via some ubiquitin ligase activity. In Homo sapiens (Human), this protein is Probable E3 ubiquitin-protein ligase DTX3 (DTX3).